The chain runs to 422 residues: Killer cell immunoglobulin-like receptor 3DL1 (422 aa).

Residues 1–21 form the signal peptide; that stretch reads MMFEFLSLLCSGFFLVQRMSA. Topologically, residues 22 to 329 are extracellular; sequence HMGSYDKPFL…KNLHIQIGLL (308 aa). Ig-like C2-type domains are found at residues 42–100, 135–202, and 237–300; these read GQNV…HHQY, GENV…YNHS, and EQNM…FKNS. N-linked (GlcNAc...) asparagine glycosylation is present at N44. A disulfide bridge links C49 with C95. A glycan (N-linked (GlcNAc...) asparagine) is linked at N137. C142 and C195 are joined by a disulfide. N-linked (GlcNAc...) asparagine glycans are attached at residues N200 and N239. C244 and C293 form a disulfide bridge. A glycan (N-linked (GlcNAc...) asparagine) is linked at N299. Residues 330 to 350 traverse the membrane as a helical segment; sequence VTMVLVIVVIIIIIIIIIIII. At 351–422 the chain is on the cytoplasmic side; the sequence is YYYYFSKKSS…DTVVYTEVMI (72 aa).

Belongs to the immunoglobulin superfamily.

The protein localises to the cell membrane. Functionally, receptor on natural killer (NK) cells. Inhibits the activity of NK cells thus preventing cell lysis. This chain is Killer cell immunoglobulin-like receptor 3DL1 (Kir3dl1), found in Rattus norvegicus (Rat).